A 241-amino-acid chain; its full sequence is 3-dehydroquinate dehydratase (241 aa).

Residues 35–37 and arginine 70 contribute to the 3-dehydroquinate site; that span reads ELR. The Proton donor/acceptor role is filled by histidine 132. The Schiff-base intermediate with substrate role is filled by lysine 159. Arginine 201 and glutamine 224 together coordinate 3-dehydroquinate.

This sequence belongs to the type-I 3-dehydroquinase family. In terms of assembly, homodimer.

The catalysed reaction is 3-dehydroquinate = 3-dehydroshikimate + H2O. It participates in metabolic intermediate biosynthesis; chorismate biosynthesis; chorismate from D-erythrose 4-phosphate and phosphoenolpyruvate: step 3/7. Functionally, involved in the third step of the chorismate pathway, which leads to the biosynthesis of aromatic amino acids. Catalyzes the cis-dehydration of 3-dehydroquinate (DHQ) and introduces the first double bond of the aromatic ring to yield 3-dehydroshikimate. This chain is 3-dehydroquinate dehydratase, found in Staphylococcus carnosus (strain TM300).